Consider the following 78-residue polypeptide: Defensin-like protein 74 (78 aa).

The first 28 residues, 1–28, serve as a signal peptide directing secretion; the sequence is MNYKIGIMSLLVITSIIFLFLVPDKVEA. 4 cysteine pairs are disulfide-bonded: cysteine 32–cysteine 73, cysteine 36–cysteine 58, cysteine 42–cysteine 71, and cysteine 46–cysteine 72.

The protein belongs to the DEFL family.

It localises to the secreted. This chain is Defensin-like protein 74 (LCR43), found in Arabidopsis thaliana (Mouse-ear cress).